The following is a 143-amino-acid chain: MLQPKKTKFRRSQKGRMKGNAQRGNRLSFGSFGIKTLQAKWITGQQIEAARIAVTRCMQRQGQVWVRIFPDKPITKKPAEVRMGKGKGSPEGFVVPVTPGRILFEVEGVVFDVAKEALRLAAQKLPVTTKFIVRHDYDFNILK.

The segment covering 1–17 has biased composition (basic residues); it reads MLQPKKTKFRRSQKGRM. Residues 1–25 form a disordered region; the sequence is MLQPKKTKFRRSQKGRMKGNAQRGN.

This sequence belongs to the universal ribosomal protein uL16 family. In terms of assembly, part of the 50S ribosomal subunit.

Binds 23S rRNA and is also seen to make contacts with the A and possibly P site tRNAs. This is Large ribosomal subunit protein uL16 from Azobacteroides pseudotrichonymphae genomovar. CFP2.